The chain runs to 388 residues: Mannitol-1-phosphate 5-dehydrogenase (388 aa).

Residue 5 to 16 (AIQFGGGNIGRG) coordinates NAD(+). Lys213 is a catalytic residue.

It belongs to the mannitol dehydrogenase family. In terms of assembly, monomer.

The catalysed reaction is D-mannitol 1-phosphate + NAD(+) = beta-D-fructose 6-phosphate + NADH + H(+). Its function is as follows. Catalyzes the NAD(H)-dependent interconversion of D-fructose 6-phosphate and D-mannitol 1-phosphate in the metabolism of mannitol. Has a strong preference for NADH over NADPH. The protein is Mannitol-1-phosphate 5-dehydrogenase (mpdA) of Aspergillus niger (strain ATCC MYA-4892 / CBS 513.88 / FGSC A1513).